Here is a 437-residue protein sequence, read N- to C-terminus: Glutamate-1-semialdehyde 2,1-aminomutase 1 (437 aa).

Lys-268 is subject to N6-(pyridoxal phosphate)lysine.

Belongs to the class-III pyridoxal-phosphate-dependent aminotransferase family. HemL subfamily. Homodimer. Requires pyridoxal 5'-phosphate as cofactor.

The protein resides in the cytoplasm. The catalysed reaction is (S)-4-amino-5-oxopentanoate = 5-aminolevulinate. It participates in porphyrin-containing compound metabolism; protoporphyrin-IX biosynthesis; 5-aminolevulinate from L-glutamyl-tRNA(Glu): step 2/2. This chain is Glutamate-1-semialdehyde 2,1-aminomutase 1, found in Halalkalibacterium halodurans (strain ATCC BAA-125 / DSM 18197 / FERM 7344 / JCM 9153 / C-125) (Bacillus halodurans).